Reading from the N-terminus, the 369-residue chain is Dual specificity protein phosphatase 1-A (369 aa).

The 118-residue stretch at 21–138 folds into the Rhodanese domain; the sequence is RAHKCLILDC…FSAQCPEFCT (118 aa). Residue Thr168 is modified to Phosphothreonine; by MAPK1. The Tyrosine-protein phosphatase domain maps to 175–316; the sequence is GPVEILPFLY…LLQFESQVLA (142 aa). Cys260 (phosphocysteine intermediate) is an active-site residue.

The protein belongs to the protein-tyrosine phosphatase family. Non-receptor class dual specificity subfamily. Phosphorylated by MAPK1/ERK2 at Thr-168 and at one or more serine residues in a progesterone-dependent manner. Phosphorylation reduces its rate of degradation but does not seem to affect phosphatase activity. As to expression, expressed in XIK-2 kidney cells.

It is found in the nucleus. It catalyses the reaction O-phospho-L-seryl-[protein] + H2O = L-seryl-[protein] + phosphate. It carries out the reaction O-phospho-L-threonyl-[protein] + H2O = L-threonyl-[protein] + phosphate. The catalysed reaction is O-phospho-L-tyrosyl-[protein] + H2O = L-tyrosyl-[protein] + phosphate. In terms of biological role, dual specificity phosphatase that dephosphorylates MAP kinase MAPK1/ERK2 on both 'Thr-188' and 'Tyr-190', regulating its activity during the meiotic cell cycle. In Xenopus laevis (African clawed frog), this protein is Dual specificity protein phosphatase 1-A.